The primary structure comprises 453 residues: Keratin, type I cytoskeletal 15 (453 aa).

Positions 1-102 (MATTLLQTSS…GGDGGLLSGN (102 aa)) are head. A phosphoserine mark is found at Ser-16, Ser-17, Ser-34, Ser-48, and Ser-56. Positions 103-138 (EKITMQNLNDRLASYLEKVRALEEANADLEVKIRDW) are coil 1A. Positions 103 to 415 (EKITMQNLND…SLLEGQDARM (313 aa)) constitute an IF rod domain. The segment at 139–157 (YQRQSPTSPERDYSPYFKT) is linker 1. Residues 158–249 (TDELRDKILA…KNHEEEMKEF (92 aa)) are coil 1B. The linker 12 stretch occupies residues 250 to 269 (SNQLAGQVNVEMDAAPGVDL). Residues 270–411 (TRVLSEMREQ…ATYHSLLEGQ (142 aa)) form a coil 2 region. Lys-298 is covalently cross-linked (Glycyl lysine isopeptide (Lys-Gly) (interchain with G-Cter in SUMO2)). Thr-299 and Thr-321 each carry phosphothreonine. Residues 412–453 (DARMAGIGTGEASLGGGGGGKVRINVEESVDGKVVSSRKREI) form a tail region. A Glycyl lysine isopeptide (Lys-Gly) (interchain with G-Cter in SUMO1); alternate cross-link involves residue Lys-444. Lys-444 is covalently cross-linked (Glycyl lysine isopeptide (Lys-Gly) (interchain with G-Cter in SUMO2); alternate).

The protein belongs to the intermediate filament family. Heterotetramer of two type I and two type II keratins. Interacts with NOD2. As to expression, expressed in the basal cell layers of several stratified epithelia including esophagus, tongue, stomach, epidermis and hair follicle. In the hair follicle, expression is detected mainly in the basal layer of the outer root sheath (ORS), except just above the follicle bulb where it occurs throughout its thickness. Low expression levels are seen in the single layer of ORS cells around the base of the follicle which increases in the palisade-like cells of the bulb. Also expressed in the basal cells of the sebaceous glands, and expression in the epidermis occurs in a punctate pattern.

The sequence is that of Keratin, type I cytoskeletal 15 from Ovis aries (Sheep).